The sequence spans 912 residues: Probable dipeptidyl-aminopeptidase B (912 aa).

Positions 1–25 are enriched in basic and acidic residues; that stretch reads MAAEKGESSDEERKPLTRDSMEYRD. 2 disordered regions span residues 1 to 31 and 49 to 70; these read MAAEKGESSDEERKPLTRDSMEYRDSSNSLH and GSTHDTGPNEIGRGDRDYSDDG. The Cytoplasmic portion of the chain corresponds to 1-92; it reads MAAEKGESSD…GGKPVQKKVK (92 aa). Residues 93–113 traverse the membrane as a helical; Signal-anchor for type II membrane protein segment; it reads IVLGFLLFLCLSGWSLSFVLF. Topologically, residues 114 to 912 are vacuolar; the sequence is LFGGHESSKT…RAAIWVGLSI (799 aa). N-linked (GlcNAc...) asparagine glycans are attached at residues Asn-130, Asn-210, Asn-346, Asn-569, and Asn-656. The active-site Charge relay system is Ser-751. Asn-810 carries N-linked (GlcNAc...) asparagine glycosylation. Residues Asp-828 and His-861 each act as charge relay system in the active site. The N-linked (GlcNAc...) asparagine glycan is linked to Asn-897.

The protein belongs to the peptidase S9B family.

It localises to the vacuole membrane. It catalyses the reaction Release of an N-terminal dipeptide, Xaa-Yaa-|-Zaa-, from a polypeptide, preferentially when Yaa is Pro, provided Zaa is neither Pro nor hydroxyproline.. Type IV dipeptidyl-peptidase which removes N-terminal dipeptides sequentially from polypeptides having unsubstituted N-termini provided that the penultimate residue is proline. This chain is Probable dipeptidyl-aminopeptidase B (DAPB), found in Paracoccidioides lutzii (strain ATCC MYA-826 / Pb01) (Paracoccidioides brasiliensis).